Consider the following 303-residue polypeptide: Movement protein (303 aa).

The stretch at 272–302 forms a coiled coil; it reads PPKRDFELTETSKLKSMISDLTQKVVNLDKK.

It belongs to the caulimoviridae movement protein family. As to quaternary structure, homotrimer, through the coiled-coil domain. Interacts with VAP.

It is found in the host cell junction. The protein localises to the host plasmodesma. Transports viral genome to neighboring plant cells directly through plasmosdesmata, without any budding. The movement protein allows efficient cell to cell propagation, by bypassing the host cell wall barrier. Acts by forming tubules structures that increase the size exclusion limit (SEL) of plasmodesmata, thereby allowing viral ribonucleocapsids to spread directly to neighboring cells. This is Movement protein from Soybean chlorotic mottle virus.